The chain runs to 130 residues: Small ribosomal subunit protein uS8A (130 aa).

The protein belongs to the universal ribosomal protein uS8 family.

In Drosophila melanogaster (Fruit fly), this protein is Small ribosomal subunit protein uS8A (RpS15Aa).